We begin with the raw amino-acid sequence, 257 residues long: Probable pectate lyase G (257 aa).

The N-terminal stretch at 1-24 is a signal peptide; it reads MPVLSKLLPTLTLTLPLLAGPCLA.

Belongs to the polysaccharide lyase 3 family. Requires Ca(2+) as cofactor.

It is found in the secreted. It carries out the reaction Eliminative cleavage of (1-&gt;4)-alpha-D-galacturonan to give oligosaccharides with 4-deoxy-alpha-D-galact-4-enuronosyl groups at their non-reducing ends.. Functionally, pectinolytic enzyme consist of four classes of enzymes: pectin lyase, polygalacturonase, pectin methylesterase and rhamnogalacturonase. Among pectinolytic enzymes, pectin lyase is the most important in depolymerization of pectin, since it cleaves internal glycosidic bonds of highly methylated pectins. Favors pectate, the anion, over pectin, the methyl ester. The protein is Probable pectate lyase G (plyG) of Emericella nidulans (strain FGSC A4 / ATCC 38163 / CBS 112.46 / NRRL 194 / M139) (Aspergillus nidulans).